The sequence spans 478 residues: Receptor-interacting serine/threonine-protein kinase 3 (478 aa).

Ser-2 is subject to Phosphoserine. The Protein kinase domain maps to 22-290 (LENLGFVGKG…CESKTNNVYI (269 aa)). Residues 28-36 (VGKGGFGAV) and Lys-51 contribute to the ATP site. Residue Asp-143 is the Proton acceptor of the active site. Ser-165 is subject to Phosphoserine. Thr-185 carries the post-translational modification Phosphothreonine. Position 201 is a phosphoserine; by autocatalysis (Ser-201). Thr-228 bears the Phosphothreonine mark. At Ser-229 the chain carries Phosphoserine; by autocatalysis. Thr-254 carries the phosphothreonine modification. A phosphoserine mark is found at Ser-301 and Ser-323. Residues 311–330 (RSSDTKLSARESSQKGTEVD) are disordered. Residues 313 to 330 (SDTKLSARESSQKGTEVD) are compositionally biased toward basic and acidic residues. At Thr-335 the chain carries Phosphothreonine. Phosphoserine occurs at positions 350, 369, and 380. The segment at 362–429 (ERRGKEASFG…RNSNPWYTWN (68 aa)) is disordered. Positions 376–385 (AGTSSDTLAG) are enriched in polar residues. Thr-392 carries the phosphothreonine modification. The span at 413 to 429 (QRNQGDGRNSNPWYTWN) shows a compositional bias: polar residues. The RIP homotypic interaction motif (RHIM) motif lies at 437–461 (LQSIVLNNCSEVQIGQHNCMSVQPR). The residue at position 474 (Arg-474) is an Omega-N-methylarginine.

The protein belongs to the protein kinase superfamily. TKL Ser/Thr protein kinase family. Interacts (via RIP homotypic interaction motif) with RIPK1 (via RIP homotypic interaction motif); this interaction induces RIPK1 phosphorylation and formation of a RIPK1-RIPK3 necrosis-inducing complex. Interacts with MLKL; the interaction is direct and triggers necroptosis. Interacts with ZBP1 (via RIP homotypic interaction motif); interaction with ZBP1 activates RIPK3, triggering necroptosis. Upon TNF-induced necrosis, the RIPK1-RIPK3 dimer further interacts with PGAM5 and MLKL; the formation of this complex leads to PGAM5 phosphorylation and increase in PGAM5 phosphatase activity. Binds TRAF2 and is recruited to the TNFR-1 signaling complex. Interacts with PYGL, GLUL and GLUD1; these interactions result in activation of these metabolic enzymes. Interacts with BIRC2/c-IAP1, BIRC3/c-IAP2 and XIAP/BIRC4. Interacts with ARHGEF2. Interacts with PELI1 (via atypical FHA domain); the phosphorylated form at Thr-185 binds preferentially to PELI1. Interacts with BUB1B, TRAF2 and STUB1. Interacts with CASP6. Component of the AIM2 PANoptosome complex, a multiprotein complex that drives inflammatory cell death (PANoptosis). In terms of processing, RIPK1 and RIPK3 undergo reciprocal auto- and trans-phosphorylation. Autophosphorylated following interaction with ZBP1. Phosphorylation of Ser-201 plays a role in the necroptotic function of RIPK3. Autophosphorylates at Thr-228 and Ser-229 following activation by ZBP1: phosphorylation at these sites is a hallmark of necroptosis and is required for binding MLKL. Phosphorylation at Thr-185 is important for its kinase activity, interaction with PELI1 and for its ability to mediate TNF-induced necroptosis. Post-translationally, polyubiquitinated with 'Lys-48' and 'Lys-63'-linked chains by BIRC2/c-IAP1 and BIRC3/c-IAP2, leading to activation of NF-kappa-B. Ubiquitinated by STUB1 leading to its subsequent proteasome-dependent degradation.

The protein resides in the cytoplasm. It localises to the cytosol. The protein localises to the nucleus. It catalyses the reaction L-seryl-[protein] + ATP = O-phospho-L-seryl-[protein] + ADP + H(+). The enzyme catalyses L-threonyl-[protein] + ATP = O-phospho-L-threonyl-[protein] + ADP + H(+). Its activity is regulated as follows. Activity is stimulated by ZBP1, which senses double-stranded Z-RNA structures. RIPK3-dependent necroptosis is inhibited by RIPK1: RIPK1 prevents the ZBP1-induced activation of RIPK3 via FADD-mediated recruitment of CASP8, which cleaves RIPK1 and limits TNF-induced necroptosis. In terms of biological role, serine/threonine-protein kinase that activates necroptosis and apoptosis, two parallel forms of cell death. Necroptosis, a programmed cell death process in response to death-inducing TNF-alpha family members, is triggered by RIPK3 following activation by ZBP1. Activated RIPK3 forms a necrosis-inducing complex and mediates phosphorylation of MLKL, promoting MLKL localization to the plasma membrane and execution of programmed necrosis characterized by calcium influx and plasma membrane damage. In addition to TNF-induced necroptosis, necroptosis can also take place in the nucleus in response to orthomyxoviruses infection: following ZBP1 activation, which senses double-stranded Z-RNA structures, nuclear RIPK3 catalyzes phosphorylation and activation of MLKL, promoting disruption of the nuclear envelope and leakage of cellular DNA into the cytosol. Also regulates apoptosis: apoptosis depends on RIPK1, FADD and CASP8, and is independent of MLKL and RIPK3 kinase activity. Phosphorylates RIPK1: RIPK1 and RIPK3 undergo reciprocal auto- and trans-phosphorylation. In some cell types, also able to restrict viral replication by promoting cell death-independent responses. In response to flavivirus infection in neurons, promotes a cell death-independent pathway that restricts viral replication: together with ZBP1, promotes a death-independent transcriptional program that modifies the cellular metabolism via up-regulation expression of the enzyme ACOD1/IRG1 and production of the metabolite itaconate. Itaconate inhibits the activity of succinate dehydrogenase, generating a metabolic state in neurons that suppresses replication of viral genomes. RIPK3 binds to and enhances the activity of three metabolic enzymes: GLUL, GLUD1, and PYGL. These metabolic enzymes may eventually stimulate the tricarboxylic acid cycle and oxidative phosphorylation, which could result in enhanced ROS production. The protein is Receptor-interacting serine/threonine-protein kinase 3 of Rattus norvegicus (Rat).